Consider the following 568-residue polypeptide: CDK5 and ABL1 enzyme substrate 1 (568 aa).

Low complexity predominate over residues 1–31 (MAAATATAGTAACSSSSSSRGGSTDAAATSG). 2 disordered regions span residues 1 to 94 (MAAA…PGAR) and 130 to 169 (PSLVPRVLGEPSQPPRSAPAVTGAQLQLPDGPGGAGQEEL). An interaction with TDRD7 region spans residues 1–98 (MAAATATAGT…TKPGARARLS (98 aa)). Residues 33-45 (QPPPPPPATAPPE) show a composition bias toward pro residues. Residues 46 to 56 (PLRKPRMDPRR) are compositionally biased toward basic and acidic residues. An interaction with CDK3 region spans residues 140 to 427 (PSQPPRSAPA…TTVIDYVKPS (288 aa)). Serine 248 carries the post-translational modification Phosphoserine. Position 274 is a phosphoserine; by CDK2 and CDK3 (serine 274). Phosphothreonine is present on threonine 350.

The protein belongs to the cyclin family. Found in a complex with p53/TP53. Found in a number of complexes with CDK2, CDK3, CDK5, ABL1, TDRD7, CDK17, CCNA1, CCNE1 and TP73. Interacts with CDK2, CDK3, CDK5, ABL1 and TDRD7. In terms of processing, phosphorylated on Ser-274 by CCNE1/CDK3. Phosphorylated on serine/threonine residues by CDK5 and on tyrosine residues by ABL1. Also phosphorylated in vitro by CCNA1/CDK2, CCNE1/CDK2, CCNA1/CDK3 and CCNE1/CDK3. As to expression, ubiquitous. Expressed in postnatal day 1 (P1), in postmitotic neurons of the subplate, cortex (V/VI) and marginal zone; in postnatal day 7 (P7), in all layers of the cerebral cortex and in the CA1 and CA2 regions of the hippocampus (at protein level). Highly expressed in brain, kidney, liver and lung.

It localises to the nucleus. Its subcellular location is the cytoplasm. The protein resides in the cell projection. The protein localises to the growth cone. Functionally, cyclin-dependent kinase binding protein. Enhances cyclin-dependent kinase tyrosine phosphorylation by nonreceptor tyrosine kinases, such as that of CDK5 by activated ABL1, which leads to increased CDK5 activity and is critical for neuronal development, and that of CDK2 by WEE1, which leads to decreased CDK2 activity and growth inhibition. Positively affects neuronal outgrowth. Plays a role as a regulator for p53/p73-induced cell death. The protein is CDK5 and ABL1 enzyme substrate 1 (Cables1) of Mus musculus (Mouse).